The following is a 478-amino-acid chain: MSENKNSEAEDVFEFLDSLPEAKNGGKMVNTDVKGSQEGVKGGSNSVAGKTGNDGKKGDDDIFEFLEELEKSNLSLTDKKGVEKKAPSESVNNKAQDEKVEESKENKNSEQDAHGKEKEPQQQEKEEEEEEEEEEEEEEEETPLHDPIASISNWWSSSGSAKVSSIWNKTAEQASQIKNRLAQEQLDLTSKINTSTITEIARNLQKIVVGETEEVLRIHLVHDLVNYPSLQYNIESKFDQVLSSQVEGGIRIFVDEWGHPNNNGITPVEKKPSVADGELGNSKKKLQFNLFDGKVTDGEKLAFANLENAVKLFNTAHEEYQKQQKEADATPDDDRSSISSNSNKISDLFISILPIAIPQKQKDADGDFQVTDSNTPGNFNFTLVLKDITNDITTITRSQGFPVKWVNWLEGSVEKTGSTASEERNKSYDQKKQKESEDEDEDDEIIDPSEWVKEWIEDGLSLSFGVMAQNYVIDRMGL.

A disordered region spans residues 1–153 (MSENKNSEAE…LHDPIASISN (153 aa)). Basic and acidic residues-rich tracts occupy residues 77 to 87 (TDKKGVEKKAP) and 95 to 124 (AQDEKVEESKENKNSEQDAHGKEKEPQQQE). Residues 125 to 141 (KEEEEEEEEEEEEEEEE) show a composition bias toward acidic residues. S273 is subject to Phosphoserine. Basic and acidic residues-rich tracts occupy residues 321 to 336 (QKQQKEADATPDDDRS) and 421 to 435 (SEERNKSYDQKKQKE). 2 disordered regions span residues 321–341 (QKQQKEADATPDDDRSSISSN) and 416–448 (TGSTASEERNKSYDQKKQKESEDEDEDDEIIDP). S436 bears the Phosphoserine mark. Residues 436–447 (SEDEDEDDEIID) show a composition bias toward acidic residues.

The protein belongs to the MTC1 family. In terms of assembly, interacts with ribosomes.

The protein resides in the cytoplasm. It is found in the cytoplasmic vesicle. The protein localises to the COPI-coated vesicle. Its function is as follows. Involved in telomere capping. This is Maintenance of telomere capping protein 1 (MTC1) from Saccharomyces cerevisiae (strain ATCC 204508 / S288c) (Baker's yeast).